The sequence spans 184 residues: ATP synthase subunit b, chloroplastic (184 aa).

Residues 27 to 49 traverse the membrane as a helical segment; sequence LATNPINLSVVLGVLIFFGKGVL.

It belongs to the ATPase B chain family. As to quaternary structure, F-type ATPases have 2 components, F(1) - the catalytic core - and F(0) - the membrane proton channel. F(1) has five subunits: alpha(3), beta(3), gamma(1), delta(1), epsilon(1). F(0) has four main subunits: a(1), b(1), b'(1) and c(10-14). The alpha and beta chains form an alternating ring which encloses part of the gamma chain. F(1) is attached to F(0) by a central stalk formed by the gamma and epsilon chains, while a peripheral stalk is formed by the delta, b and b' chains.

It localises to the plastid. The protein resides in the chloroplast thylakoid membrane. Its function is as follows. F(1)F(0) ATP synthase produces ATP from ADP in the presence of a proton or sodium gradient. F-type ATPases consist of two structural domains, F(1) containing the extramembraneous catalytic core and F(0) containing the membrane proton channel, linked together by a central stalk and a peripheral stalk. During catalysis, ATP synthesis in the catalytic domain of F(1) is coupled via a rotary mechanism of the central stalk subunits to proton translocation. Functionally, component of the F(0) channel, it forms part of the peripheral stalk, linking F(1) to F(0). This is ATP synthase subunit b, chloroplastic from Gossypium barbadense (Sea Island cotton).